The sequence spans 57 residues: Lantibiotic nukacin (57 aa).

Residues 1-30 (MENSKVMKDIEVANLLEEVQEDELNEVLGA) constitute a propeptide that is removed on maturation. The segment at residues 39–44 (TVSHDC) is a cross-link (beta-methyllanthionine (Thr-Cys)). Cross-links (lanthionine (Ser-Cys)) lie at residues 41–55 (SHDC…VFTC) and 48–56 (SFQFVFTCC). Threonine 54 bears the 2,3-didehydrobutyrine mark.

Post-translationally, maturation of lantibiotics involves the enzymatic conversion of Thr, and Ser into dehydrated AA and the formation of thioether bonds with cysteine. This is followed by membrane translocation and cleavage of the modified precursor.

It localises to the secreted. Functionally, lanthionine-containing peptide antibiotic (lantibiotic) active on Gram-positive bacteria. The bactericidal activity of lantibiotics is based on depolarization of energized bacterial cytoplasmic membranes, initiated by the formation of aqueous transmembrane pores. This chain is Lantibiotic nukacin, found in Staphylococcus simulans.